We begin with the raw amino-acid sequence, 313 residues long: Olfactory receptor 8B2 (313 aa).

The Extracellular portion of the chain corresponds to 1 to 25 (MLARNNSLVTEFILAGLTDHPEFRQ). N-linked (GlcNAc...) asparagine glycosylation is present at N5. A helical transmembrane segment spans residues 26–46 (PLFFLFLVIYIVTMVGNLGLI). The Cytoplasmic segment spans residues 47–54 (TLFGLNSH). The chain crosses the membrane as a helical span at residues 55-75 (LHTPMYYFLFNLSFIDLCYSS). Residues 76–99 (VFTPKMLMNFVSKKNIISNVGCMT) are Extracellular-facing. C97 and C189 form a disulfide bridge. A helical membrane pass occupies residues 100–120 (RLFFFLFFVISECYMLTSMAY). The Cytoplasmic segment spans residues 121-139 (DRYVAICNPLLYKVTMSHQ). A helical transmembrane segment spans residues 140–160 (VCSMLTFAAYIMGLAGATAHT). Topologically, residues 161–197 (GCMLRLTFCSANIINHYLCDILPLLQLSCTSTYVNEV) are extracellular. The helical transmembrane segment at 198 to 217 (VVLIVVGTNITVPSCTILIS) threads the bilayer. The Cytoplasmic portion of the chain corresponds to 218–237 (YVFIVTSILHIKSTQGRSKA). A helical membrane pass occupies residues 238 to 258 (FSTCSSHVIALSLFFGSAAFM). Over 259–270 (YIKYSSGSMEQG) the chain is Extracellular. A helical membrane pass occupies residues 271–291 (KVSSVFYTNVVPMLNPLIYSL). Residues 292–313 (RNKDVKVALRKALIKIQRRNIF) lie on the Cytoplasmic side of the membrane.

It belongs to the G-protein coupled receptor 1 family.

The protein localises to the cell membrane. Its function is as follows. Odorant receptor. The protein is Olfactory receptor 8B2 (OR8B2) of Homo sapiens (Human).